The primary structure comprises 915 residues: MFAVHLVAFYFTKLKEDQIKKVDRFLYHMRLSDETLVDIMARFQAEMEKGLGKDTNPTASVKMLPTFVRAIPDGSENGEFLSLDLGGSKFRVLKVQVSQEGQQNVQMESQFYPMPNEITRGNGTELFDYVADCLADFMKTKNLTHKKLPLGFTFSFPCRQNKLEEGVLLSWTKKFKARGVQDTDVVNRLATAMKKHKDLDVDILALVNDTVGTMMTCAYDDPNCEVGVIIGTGTNACYMEDMSNIDLVEGDEGRMCINTEWGAFGDDGALEDIRTEFDRELDLGSLNPGKQLFEKMISGLYMGELVRLILLKMAKVGLLFGGAKSSALHTKGKIETQHVAAMEMSKEGLANTREILVDLGLEPSESDCIAVQHVCTIVSFRSANLCAAALATILTRLRENKKLARLRTTVGMDGTLYKTHPQYPKRLHKVVRRLVPNCDVRFLLSESGSTKGAAMVTAVASRVQAQRKQIDKVLALFQLTREQLLGVRDKMRAELEYGLKKKTHSLATVKMLPTYVYGMPDGTEKGKFLALDLGGTNFRVLLVKIRRRSVRMYNKIFAIPLEIMQGTGEELFDHIVQCIADFLDYMGLKGAQLPLGFTFSFPCRQTCIDKGTLVGWTKGFKATDCEGEDVVDMLREAIKRRNEFDLDIVAIVNDTVGTMMTCGYEDPRCEIGLIAGTGSNVCYMEEMRNIELVDGDEGRMCVNTEWGGFGDNGCIDDIRTQYDKEVDEGSLNAGKQRYEKMTSGMYLGEIVRRILIDLTRQGLLFRGQISERLRTRGIFETKFLSQIESDRLALLQVRRILQQLGLDSTCEDSIVVKEVCGAVSRRAAQMCGAGMAAIVEKRREDQGLQHFKVTVGVDGTLYKLHPHFSRILQETVKELAPQCDVTFMLSEDGSGKGAALITAVAKRLQQPRKDI.

A mitochondrial-binding peptide (MBP) region spans residues 1 to 20 (MFAVHLVAFYFTKLKEDQIK). Hexokinase domains follow at residues 16–458 (EDQI…MVTA) and 464–903 (QAQR…LITA). ATP-binding positions include Arg30 and 84 to 89 (DLGGSK). A hexokinase small subdomain 1 region spans residues 73–207 (DGSENGEFLS…DLDVDILALV (135 aa)). Position 84-91 (84-91 (DLGGSKFR)) interacts with D-glucose 6-phosphate. D-glucose contacts are provided by residues Ser155, 172–173 (TK), and 208–209 (ND). The segment at 208-447 (NDTVGTMMTC…CDVRFLLSES (240 aa)) is hexokinase large subdomain 1. 2 residues coordinate D-glucose 6-phosphate: Asp209 and Thr232. D-glucose is bound by residues Asn235, Glu260, and 291–294 (QLFE). 413–415 (DGT) serves as a coordination point for D-glucose 6-phosphate. Residue 425 to 426 (KR) participates in ATP binding. D-glucose 6-phosphate-binding positions include Ser449 and 532–536 (DLGGT). The hexokinase small subdomain 2 stretch occupies residues 521–652 (DGTEKGKFLA…EFDLDIVAIV (132 aa)). ATP is bound at residue 532–537 (DLGGTN). D-glucose contacts are provided by residues 600-601 (SF), 617-618 (TK), and 653-654 (ND). A hexokinase large subdomain 2 region spans residues 653 to 892 (NDTVGTMMTC…CDVTFMLSED (240 aa)). Asp654 and Thr677 together coordinate D-glucose 6-phosphate. Thr677 is a binding site for ATP. Residues 679-680 (SN), Glu705, and Glu739 contribute to the D-glucose site. Residues 744–745 (GM), 781–785 (TKFLS), and 860–864 (TLYKL) each bind ATP. D-glucose 6-phosphate-binding positions include 858 to 860 (DGT) and Ser894.

It belongs to the hexokinase family. Widely expressed. Detected in retina, brain, cerebellum, liver, lung, kidney, spleen, pancreas and intestine.

The protein resides in the cytoplasm. It is found in the mitochondrion membrane. It localises to the photoreceptor inner segment. It carries out the reaction a D-hexose + ATP = a D-hexose 6-phosphate + ADP + H(+). The enzyme catalyses D-glucose + ATP = D-glucose 6-phosphate + ADP + H(+). It functions in the pathway carbohydrate metabolism; hexose metabolism. Its pathway is carbohydrate degradation; glycolysis; D-glyceraldehyde 3-phosphate and glycerone phosphate from D-glucose: step 1/4. Functionally, catalyzes the phosphorylation of hexose to hexose 6-phosphate, although at very low level compared to other hexokinases. Has low glucose phosphorylating activity compared to other hexokinases. Involved in glucose homeostasis and hepatic lipid accumulation. Required to maintain whole-body glucose homeostasis during pregnancy; however additional evidences are required to confirm this role. In Mus musculus (Mouse), this protein is Hexokinase HKDC1.